The chain runs to 317 residues: Lipopolysaccharide heptosyltransferase 1 (317 aa).

Residues threonine 187, threonine 188, lysine 192, glutamate 222, methionine 242, aspartate 261, threonine 262, glycine 263, and histidine 266 each coordinate ADP-L-glycero-beta-D-manno-heptose.

It belongs to the glycosyltransferase 9 family.

The protein localises to the cell inner membrane. The catalysed reaction is an alpha-Kdo-(2-&gt;4)-alpha-Kdo-(2-&gt;6)-lipid A + ADP-L-glycero-beta-D-manno-heptose = an L-alpha-D-Hep-(1-&gt;5)-[alpha-Kdo-(2-&gt;4)]-alpha-Kdo-(2-&gt;6)-lipid A + ADP + H(+). The protein operates within bacterial outer membrane biogenesis; LPS core biosynthesis. Glycosyltransferase involved in the biosynthesis of the core oligosaccharide region of lipopolysaccharide (LPS). Catalyzes the addition of the first heptose unit to one 3-deoxy-D-manno-octulosonic acid (Kdo) residue of the Kdo2-lipid A module. The polypeptide is Lipopolysaccharide heptosyltransferase 1 (Salmonella typhimurium (strain LT2 / SGSC1412 / ATCC 700720)).